Here is a 215-residue protein sequence, read N- to C-terminus: Adenylate kinase (215 aa).

10–15 (GAGKGT) provides a ligand contact to ATP. The NMP stretch occupies residues 30 to 59 (STGDIFRANISGKTELGMKAKGYMDKGLLV). AMP is bound by residues Thr31, Arg36, 57-59 (LLV), 85-88 (GFPR), and Gln92. Positions 126 to 163 (GRRVCSKCGASYHIEYNPTKVEGICDLCGSPVVQRKDD) are LID. Arg127 is a binding site for ATP. 2 residues coordinate Zn(2+): Cys130 and Cys133. Residue 136 to 137 (SY) participates in ATP binding. Residues Cys150 and Cys153 each contribute to the Zn(2+) site. Residues Arg160 and Arg171 each contribute to the AMP site. An ATP-binding site is contributed by Gln199.

This sequence belongs to the adenylate kinase family. As to quaternary structure, monomer.

Its subcellular location is the cytoplasm. It carries out the reaction AMP + ATP = 2 ADP. It functions in the pathway purine metabolism; AMP biosynthesis via salvage pathway; AMP from ADP: step 1/1. Catalyzes the reversible transfer of the terminal phosphate group between ATP and AMP. Plays an important role in cellular energy homeostasis and in adenine nucleotide metabolism. This is Adenylate kinase from Clostridium acetobutylicum (strain ATCC 824 / DSM 792 / JCM 1419 / IAM 19013 / LMG 5710 / NBRC 13948 / NRRL B-527 / VKM B-1787 / 2291 / W).